The sequence spans 649 residues: MPLLSRITGPADLRRLHPEQLPPLAAEIRAFLIDNVTRTGGHLGPNLGVVELSIALHRVFDSPHDRILWDTGHQAYVHKLLTGRQDFSRVRAKDGLSGYPSRAESPHDLIENSHASTALGHADGIAKADQLLGVDRCTVAVIGDGALTGGMAWEALNNIAEAEDRPLVIVVNDNERSYAPTIGGLAHHLATLRTTKGYERFLAWGKDALQRTPVVGPPLFDALHGAKKGFKDAFAPQGMFEDLGLKYLGPIDGHDIAGVEQALRRARNFGGPVIVHCLTVKGRGYRPAEQDEADRFHAVNPIDPYTCLPISPSAGASWTSVFGKEMLALGAERPELVAVTAAMLHPVGLGPFAKAYPGRTFDVGIAEQHAVASAAGLATGGLHPVVAVYATFLNRAFDQVLMDVALHRLGVTFVLDRAGVTGNDGASHNGMWDLSVLQVVPGLRIAAPRDAARVREHVRQAVAVEDAPTVVRFPKGELGPEAPAIERIGGVDVLARTGPAPDVLLVAVGPMAAACLDAAALLAADGITATVVDPCWVKPVDPALVELAGAHRMVVTVEDNGRTGGVGAALAQAMRDADVDTPLRDLGIPQEFLAHASRGEILEEIGLTGTGVAAQTAAHARRLLPGTGTRPGAQEYRPRMPLTDWSEPA.

Thiamine diphosphate is bound by residues His-73 and 113-115; that span reads SHA. Asp-144 serves as a coordination point for Mg(2+). Thiamine diphosphate is bound by residues 145 to 146, Asn-174, Tyr-285, and Glu-367; that span reads GA. Residue Asn-174 participates in Mg(2+) binding. Residues 623–649 form a disordered region; the sequence is LLPGTGTRPGAQEYRPRMPLTDWSEPA.

Belongs to the transketolase family. DXPS subfamily. In terms of assembly, homodimer. Mg(2+) serves as cofactor. The cofactor is thiamine diphosphate.

The enzyme catalyses D-glyceraldehyde 3-phosphate + pyruvate + H(+) = 1-deoxy-D-xylulose 5-phosphate + CO2. It functions in the pathway metabolic intermediate biosynthesis; 1-deoxy-D-xylulose 5-phosphate biosynthesis; 1-deoxy-D-xylulose 5-phosphate from D-glyceraldehyde 3-phosphate and pyruvate: step 1/1. Functionally, catalyzes the acyloin condensation reaction between C atoms 2 and 3 of pyruvate and glyceraldehyde 3-phosphate to yield 1-deoxy-D-xylulose-5-phosphate (DXP). This chain is 1-deoxy-D-xylulose-5-phosphate synthase 1, found in Kitasatospora griseola (Streptomyces griseolosporeus).